The following is a 496-amino-acid chain: Probable E3 ubiquitin-protein ligase XBOS32 (496 aa).

ANK repeat units lie at residues 50 to 79 (GRNSPLHYAAAQGHHEIVSLLLESGVEINL), 83 to 112 (RGQTALMQACQYGHWEVVQTLMLFNANVHR), 117 to 147 (NGGSALHFAALHGHARCLRLVLADYVPSMPN), 180 to 209 (GGLTPLHMAALNGHVECVQLLLDLGASVIE), and 223 to 252 (AGSTPLHYAACGGNAVCCQLLIARGASLSA). The segment at 321 to 368 (CAVCLEGSCSVAAEGCKHEFCTRCALYLCSTSYTSVSPAGAIPCPLCR) adopts an RING-type zinc-finger fold.

It catalyses the reaction S-ubiquitinyl-[E2 ubiquitin-conjugating enzyme]-L-cysteine + [acceptor protein]-L-lysine = [E2 ubiquitin-conjugating enzyme]-L-cysteine + N(6)-ubiquitinyl-[acceptor protein]-L-lysine.. It participates in protein modification; protein ubiquitination. In Oryza sativa subsp. japonica (Rice), this protein is Probable E3 ubiquitin-protein ligase XBOS32 (XBOS32).